We begin with the raw amino-acid sequence, 89 residues long: ATP synthase subunit c (89 aa).

2 consecutive transmembrane segments (helical) span residues 3–23 (IILGFVALACGLIVGLGAIGA) and 53–73 (FILAGLIDAAFLIGVAIALMF).

Belongs to the ATPase C chain family. In terms of assembly, F-type ATPases have 2 components, F(1) - the catalytic core - and F(0) - the membrane proton channel. F(1) has five subunits: alpha(3), beta(3), gamma(1), delta(1), epsilon(1). F(0) has three main subunits: a(1), b(2) and c(10-14). The alpha and beta chains form an alternating ring which encloses part of the gamma chain. F(1) is attached to F(0) by a central stalk formed by the gamma and epsilon chains, while a peripheral stalk is formed by the delta and b chains.

The protein localises to the cell inner membrane. Functionally, f(1)F(0) ATP synthase produces ATP from ADP in the presence of a proton or sodium gradient. F-type ATPases consist of two structural domains, F(1) containing the extramembraneous catalytic core and F(0) containing the membrane proton channel, linked together by a central stalk and a peripheral stalk. During catalysis, ATP synthesis in the catalytic domain of F(1) is coupled via a rotary mechanism of the central stalk subunits to proton translocation. Its function is as follows. Key component of the F(0) channel; it plays a direct role in translocation across the membrane. A homomeric c-ring of between 10-14 subunits forms the central stalk rotor element with the F(1) delta and epsilon subunits. The polypeptide is ATP synthase subunit c (Verminephrobacter eiseniae (strain EF01-2)).